Consider the following 140-residue polypeptide: Alpha-lactalbumin (140 aa).

The N-terminal stretch at 1-19 (MMSLLSLLLLGIALPATQA) is a signal peptide. One can recognise a C-type lysozyme domain in the interval 20-140 (IDYRKCQASQ…CIEDLDQWRC (121 aa)). Cystine bridges form between Cys-25–Cys-140, Cys-47–Cys-131, Cys-80–Cys-96, and Cys-92–Cys-110. N-linked (GlcNAc...) asparagine glycosylation occurs at Asn-63. Lys-98, Asp-101, Asp-103, Asp-106, and Asp-107 together coordinate Ca(2+).

The protein belongs to the glycosyl hydrolase 22 family. In terms of assembly, lactose synthase (LS) is a heterodimer of a catalytic component, beta1,4-galactosyltransferase (beta4Gal-T1) and a regulatory component, alpha-lactalbumin (LA). As to expression, mammary gland specific. Secreted in milk.

The protein resides in the secreted. Functionally, regulatory subunit of lactose synthase, changes the substrate specificity of galactosyltransferase in the mammary gland making glucose a good acceptor substrate for this enzyme. This enables LS to synthesize lactose, the major carbohydrate component of milk. In other tissues, galactosyltransferase transfers galactose onto the N-acetylglucosamine of the oligosaccharide chains in glycoproteins. The protein is Alpha-lactalbumin (LALBA) of Notamacropus eugenii (Tammar wallaby).